Here is a 176-residue protein sequence, read N- to C-terminus: ATP-dependent protease subunit HslV (176 aa).

Residue Thr2 is part of the active site. 3 residues coordinate Na(+): Gly157, Cys160, and Thr163.

Belongs to the peptidase T1B family. HslV subfamily. As to quaternary structure, a double ring-shaped homohexamer of HslV is capped on each side by a ring-shaped HslU homohexamer. The assembly of the HslU/HslV complex is dependent on binding of ATP.

It is found in the cytoplasm. The enzyme catalyses ATP-dependent cleavage of peptide bonds with broad specificity.. Allosterically activated by HslU binding. Its function is as follows. Protease subunit of a proteasome-like degradation complex believed to be a general protein degrading machinery. The sequence is that of ATP-dependent protease subunit HslV from Pseudomonas fluorescens (strain SBW25).